The primary structure comprises 288 residues: Heme oxygenase 1 (288 aa).

Residues 1–265 lie on the Cytoplasmic side of the membrane; it reads MERPQPDSMP…KPPLNTRSQA (265 aa). K18, H25, Y134, and R183 together coordinate heme b. The interval 223–260 is disordered; that stretch reads HDTKDQSPSRAPGLRQRASNKVQDSAPVETPRGKPPLN. S229 carries the post-translational modification Phosphoserine. The helical; Anchor for type IV membrane protein transmembrane segment at 266-288 threads the bilayer; the sequence is PLLRWVLTLSFLVATVAVGLYAM.

The protein belongs to the heme oxygenase family. In terms of assembly, (Microbial infection) Interacts with SARS-CoV-2 ORF3A protein; the interaction promotes ORF3A-induced autophagy but is unlikely to be involved in ORF3A-mediated induction of reticulophagy. Homodimer and higher order homooligomer. Oligomerization is crucial for its stability and function in the endoplasmic reticulum. Interacts with FLVCR2; this interaction is potentiated in the presence of heme. Post-translationally, a soluble form arises by proteolytic removal of the membrane anchor. Expressed at higher levels in renal cancer tissue than in normal tissue (at protein level).

It is found in the endoplasmic reticulum membrane. It catalyses the reaction heme b + 3 reduced [NADPH--hemoprotein reductase] + 3 O2 = biliverdin IXalpha + CO + Fe(2+) + 3 oxidized [NADPH--hemoprotein reductase] + 3 H2O + H(+). Its function is as follows. Catalyzes the oxidative cleavage of heme at the alpha-methene bridge carbon, released as carbon monoxide (CO), to generate biliverdin IXalpha, while releasing the central heme iron chelate as ferrous iron. Affords protection against programmed cell death and this cytoprotective effect relies on its ability to catabolize free heme and prevent it from sensitizing cells to undergo apoptosis. (Microbial infection) During SARS-COV-2 infection, promotes SARS-CoV-2 ORF3A-mediated autophagy but is unlikely to be required for ORF3A-mediated induction of reticulophagy. In terms of biological role, catalyzes the oxidative cleavage of heme at the alpha-methene bridge carbon, released as carbon monoxide (CO), to generate biliverdin IXalpha, while releasing the central heme iron chelate as ferrous iron. In Homo sapiens (Human), this protein is Heme oxygenase 1 (HMOX1).